Reading from the N-terminus, the 260-residue chain is Methyl-coenzyme M reductase subunit gamma (260 aa).

Arginine 123 provides a ligand contact to coenzyme M.

Belongs to the methyl-coenzyme M reductase gamma subunit family. MCR is a hexamer of two alpha, two beta, and two gamma chains, forming a dimer of heterotrimers. It depends on coenzyme F430 as a cofactor.

Its subcellular location is the cytoplasm. It catalyses the reaction coenzyme B + methyl-coenzyme M = methane + coenzyme M-coenzyme B heterodisulfide. It participates in one-carbon metabolism; methyl-coenzyme M reduction; methane from methyl-coenzyme M: step 1/1. Component of the methyl-coenzyme M reductase (MCR) I that catalyzes the reductive cleavage of methyl-coenzyme M (CoM-S-CH3 or 2-(methylthio)ethanesulfonate) using coenzyme B (CoB or 7-mercaptoheptanoylthreonine phosphate) as reductant which results in the production of methane and the mixed heterodisulfide of CoB and CoM (CoM-S-S-CoB). This is the final step in methanogenesis. The chain is Methyl-coenzyme M reductase subunit gamma (mcrG) from Methanococcus vannielii.